The chain runs to 110 residues: MAPWTRLLPLLALLSLWIPAPTRAFVNQHLCGSHLVEALYLVCGERGFFYTPKARREAEDLQGKDAELGEAPGAGGLQPSALEAPLQKRGIVEQCCASVCSLYQLEHYCN.

The first 24 residues, 1 to 24 (MAPWTRLLPLLALLSLWIPAPTRA), serve as a signal peptide directing secretion. 3 disulfide bridges follow: cysteine 31–cysteine 96, cysteine 43–cysteine 109, and cysteine 95–cysteine 100. Residues 57 to 87 (EAEDLQGKDAELGEAPGAGGLQPSALEAPLQ) constitute a propeptide, c peptide. The tract at residues 60 to 80 (DLQGKDAELGEAPGAGGLQPS) is disordered.

It belongs to the insulin family. Heterodimer of a B chain and an A chain linked by two disulfide bonds.

Its subcellular location is the secreted. In terms of biological role, insulin decreases blood glucose concentration. It increases cell permeability to monosaccharides, amino acids and fatty acids. It accelerates glycolysis, the pentose phosphate cycle, and glycogen synthesis in liver. The sequence is that of Insulin (INS) from Felis catus (Cat).